The chain runs to 380 residues: Putative ankyrin repeat protein RF_1306 (380 aa).

9 ANK repeats span residues 48-76 (NKWS…NINA), 80-109 (KCRT…KIAP), 112-143 (YGWS…KYDK), 170-199 (NNKT…KFDI), 203-233 (LGYK…GKNT), 239-268 (LEKV…GFDK), 270-299 (LGQK…DAQY), 303-333 (LGRS…DINY), and 337-366 (SGLN…YESY).

This is Putative ankyrin repeat protein RF_1306 from Rickettsia felis (strain ATCC VR-1525 / URRWXCal2) (Rickettsia azadi).